We begin with the raw amino-acid sequence, 397 residues long: MLACHHNCKHFGICGGCSSPQTEYELSLKAKELALHNLFSPLIPSQKILPVIPCSPILRGRNKMEFSFYQTVDGEKTLGFISPSKPKKGIPITECLMIDERAIDILNYTRSWWATHPELSAYYPPLNKGSLCTLTVRIGNVSNDFMIILTTSGREEFAVPLSVIQEWQKTLLDSGLPITSIFWEEKLSARNSPTTFRTTHLYGEQFLKQQLSIEGRSNIFHVRPRSFFQPQSRQAEKIIQTIKDFISPTGEETLLDLYCGAGTIGISLSPYVKKIIGVELVPDAVASAQENIQLNSANMEVFLEDAKQFCRRHEHLPPLDIVVIDPPRCGMQNKALKYLLRMSPKKIIYVSCNPLTQISECSILVEHGYQLQRMQPIDQFPHTHHLENVVLLERLSF.

[4Fe-4S] cluster contacts are provided by Cys-8, Cys-14, Cys-17, and Cys-95. S-adenosyl-L-methionine-binding residues include Gln-229, Tyr-258, Glu-279, and Asp-325. Cys-352 (nucleophile) is an active-site residue.

This sequence belongs to the class I-like SAM-binding methyltransferase superfamily. RNA M5U methyltransferase family.

This is an uncharacterized protein from Chlamydia muridarum (strain MoPn / Nigg).